Reading from the N-terminus, the 465-residue chain is tRNA-2-methylthio-N(6)-dimethylallyladenosine synthase (465 aa).

Positions 5–125 constitute an MTTase N-terminal domain; it reads RKLHIKSYGC…LPELLKRAGN (121 aa). Residues Cys-14, Cys-50, Cys-88, Cys-166, Cys-170, and Cys-173 each contribute to the [4Fe-4S] cluster site. The region spanning 152–384 is the Radical SAM core domain; that stretch reads RARGISAFVT…QELIDSQQSA (233 aa). The TRAM domain maps to 387 to 449; it reads KAAIGSTVDV…RYSFLGELVT (63 aa).

It belongs to the methylthiotransferase family. MiaB subfamily. As to quaternary structure, monomer. The cofactor is [4Fe-4S] cluster.

Its subcellular location is the cytoplasm. The catalysed reaction is N(6)-dimethylallyladenosine(37) in tRNA + (sulfur carrier)-SH + AH2 + 2 S-adenosyl-L-methionine = 2-methylsulfanyl-N(6)-dimethylallyladenosine(37) in tRNA + (sulfur carrier)-H + 5'-deoxyadenosine + L-methionine + A + S-adenosyl-L-homocysteine + 2 H(+). Its function is as follows. Catalyzes the methylthiolation of N6-(dimethylallyl)adenosine (i(6)A), leading to the formation of 2-methylthio-N6-(dimethylallyl)adenosine (ms(2)i(6)A) at position 37 in tRNAs that read codons beginning with uridine. The protein is tRNA-2-methylthio-N(6)-dimethylallyladenosine synthase of Bradyrhizobium diazoefficiens (strain JCM 10833 / BCRC 13528 / IAM 13628 / NBRC 14792 / USDA 110).